The sequence spans 518 residues: MHHARNVQFSNIHVSTVDEDVRPDFVEVDTKGWGDQGDGTYRNPXSDPDVIRVGNKXYMVASDFHXMGMQVLESDDMVXWRYISQIYRRFNEPGWDANLHYAGGSWAPSIRYHSGLFYVYFCTPDEGLYMSTASNPAGPWAPLHLVKRVAKWEDPCPFWDEDGQAYIGRSQHGAGPIIVHRMSADGKTLLDEGKTVYEGPIAEGTKFMKRNGWYYLIIPEGGVGTGWQTVLRARNIYGPYERRIVLEQGSTGVNGPHQGALVDAPDGSWWFYHFQETPVLGRVVHLQPARWEADWPVIGVDYDKNGIGEPVATWKKPVSSVGTAGFQTCDDSNDALGLHWQWNHNPVDTHWNLTDRKGWLTLKAMPADSLKMVRNMLTQKVVGYQSESTTKVSIKGDSYAGLFCSGKLFCGVGLCKDGVFIEFGGQRKIIDKGSYQEVWFKVTNDCEQNRHLFYYSIDGEHYQPAGSAFAMSGGYWKGIRVGCLTTFLQAKRLLRARHLRMLNSTISIKNSPNSLADC.

Residue aspartate 47 is the Proton acceptor of the active site. The Proton donor role is filled by glutamate 203.

This sequence belongs to the glycosyl hydrolase 43 family.

It catalyses the reaction Hydrolysis of (1-&gt;4)-beta-D-xylans, to remove successive D-xylose residues from the non-reducing termini.. The protein is Putative beta-xylosidase of Xylanibacter ruminicola (Prevotella ruminicola).